Consider the following 554-residue polypeptide: (E)-nerolidol synthase TPS18VF (554 aa).

Residues Arg-276, Asp-313, Asp-317, Arg-455, and Asp-458 each coordinate (2E,6E)-farnesyl diphosphate. Mg(2+)-binding residues include Asp-313 and Asp-317. The DDXXD motif signature appears at 313 to 317; the sequence is DDIFD. Residues Asp-458, Ser-462, and Glu-466 each contribute to the Mg(2+) site.

Belongs to the terpene synthase family. Tpsb subfamily. It depends on Mg(2+) as a cofactor. Mn(2+) is required as a cofactor. As to expression, highly expressed in glandular trichomes.

The enzyme catalyses (2E,6E)-farnesyl diphosphate + H2O = (6E)-nerolidol + diphosphate. It catalyses the reaction (2E)-geranyl diphosphate + H2O = (S)-linalool + diphosphate. Its pathway is secondary metabolite biosynthesis; terpenoid biosynthesis. In terms of biological role, involved in sesquiterpene olefins biosynthesis, constituants of cannabinoids and terpenoids-rich resins. Catalyzes primarily the conversion of (2E)-farnesyl diphosphate to (E)-nerolidol, and the conversion of (2E)-geranyl diphosphate to (+)linalool. The protein is (E)-nerolidol synthase TPS18VF of Cannabis sativa (Hemp).